The primary structure comprises 500 residues: Na(+)/H(+) antiporter NhaB (500 aa).

Transmembrane regions (helical) follow at residues 28–50 (FLLLNPLLLWLAGPVTSAWVLVG), 68–88 (GGLLVLEALLLGLATPEALYA), 98–118 (LLLMFMVAGIYFMKDLLLLLF), 121–141 (LLLGVRSKTLLSLLFCLLAAL), 145–165 (FLDALTVTAVVISVAVAFFAV), 205–225 (LLMHAAVGTALGGVCTLVGEP), 244–264 (QVAPVSMPVLAAGLLTCVLLE), 311–331 (VLIVGLALHVAEVGLIGLLVI), 350–370 (FQEALPFTALLVVFFAVVAVI), 394–414 (MLFIANGLLSAISDNVFVATI), 449–469 (VATPNGQAAFLFLLTSSIAPL), and 477–497 (MVWMALPYTLVMGGLGWWAVS).

This sequence belongs to the NhaB Na(+)/H(+) (TC 2.A.34) antiporter family.

It is found in the cell inner membrane. The enzyme catalyses 2 Na(+)(in) + 3 H(+)(out) = 2 Na(+)(out) + 3 H(+)(in). Its function is as follows. Na(+)/H(+) antiporter that extrudes sodium in exchange for external protons. The polypeptide is Na(+)/H(+) antiporter NhaB (Pseudomonas aeruginosa (strain LESB58)).